The chain runs to 372 residues: Flap endonuclease 1 (372 aa).

The tract at residues 1–105 (MGVKGLNQLI…GELEKRLLRR (105 aa)) is N-domain. Position 34 (Asp34) interacts with Mg(2+). Arg47 and Arg71 together coordinate DNA. Positions 87, 159, 161, 180, and 182 each coordinate Mg(2+). An I-domain region spans residues 123-254 (EVLKFEKRLV…ATAFKLIKEH (132 aa)). Glu159 provides a ligand contact to DNA. The DNA site is built by Gly232 and Asp234. Residue Asp234 participates in Mg(2+) binding. The interaction with PCNA stretch occupies residues 339–347 (VQGRLDGFF).

It belongs to the XPG/RAD2 endonuclease family. FEN1 subfamily. As to quaternary structure, interacts with PCNA. Three molecules of RAD27 bind to one PCNA trimer with each molecule binding to one PCNA monomer. PCNA stimulates the nuclease activity without altering cleavage specificity. Mg(2+) is required as a cofactor. Phosphorylated. Phosphorylation upon DNA damage induces relocalization to the nuclear plasma.

The protein localises to the nucleus. It localises to the nucleolus. The protein resides in the nucleoplasm. It is found in the mitochondrion. In terms of biological role, structure-specific nuclease with 5'-flap endonuclease and 5'-3' exonuclease activities involved in DNA replication and repair. During DNA replication, cleaves the 5'-overhanging flap structure that is generated by displacement synthesis when DNA polymerase encounters the 5'-end of a downstream Okazaki fragment. It enters the flap from the 5'-end and then tracks to cleave the flap base, leaving a nick for ligation. Also involved in the long patch base excision repair (LP-BER) pathway, by cleaving within the apurinic/apyrimidinic (AP) site-terminated flap. Acts as a genome stabilization factor that prevents flaps from equilibrating into structures that lead to duplications and deletions. Also possesses 5'-3' exonuclease activity on nicked or gapped double-stranded DNA, and exhibits RNase H activity. Also involved in replication and repair of rDNA and in repairing mitochondrial DNA. This is Flap endonuclease 1 from Candida dubliniensis (strain CD36 / ATCC MYA-646 / CBS 7987 / NCPF 3949 / NRRL Y-17841) (Yeast).